The chain runs to 269 residues: Chromosome-partitioning protein Spo0J (269 aa).

The segment at 1–20 (MSRKPSGLGRGLEALLPKTG) is stimulates ATPase activity of Soj by 8%. Positions 137–156 (QEEVARRVGKARSTVANALR) form a DNA-binding region, H-T-H motif. Positions 223-269 (PSPLSLELSRHLGLPVRVVGGKKGKVVIQYRSLEELEALLRRLGYQA) are required for DNA-binding; may be responsible for dimerization.

This sequence belongs to the ParB family. In terms of assembly, homodimer, probably via the C-terminal 46 residues. Dimerization of the N-terminal H-T-H region may require DNA-binding. Probably interacts with ATPase Soj.

Probably involved in chromosome partitioning. Binds to a plasmid centromere-like site parS. Stimulates the ATPase activity 10-fold of Soj; the first 20 residues may be responsible. In Thermus thermophilus (strain ATCC BAA-163 / DSM 7039 / HB27), this protein is Chromosome-partitioning protein Spo0J (spo0C).